Reading from the N-terminus, the 271-residue chain is Shikimate dehydrogenase (NADP(+)) (271 aa).

Shikimate is bound by residues 14-16 (SLS) and Thr61. Lys65 (proton acceptor) is an active-site residue. The shikimate site is built by Asn86 and Asp101. Residues 125–129 (GAGGA) and Ile212 each bind NADP(+). Residue Tyr214 coordinates shikimate. Residue Gly235 coordinates NADP(+).

The protein belongs to the shikimate dehydrogenase family. As to quaternary structure, homodimer.

The enzyme catalyses shikimate + NADP(+) = 3-dehydroshikimate + NADPH + H(+). Its pathway is metabolic intermediate biosynthesis; chorismate biosynthesis; chorismate from D-erythrose 4-phosphate and phosphoenolpyruvate: step 4/7. In terms of biological role, involved in the biosynthesis of the chorismate, which leads to the biosynthesis of aromatic amino acids. Catalyzes the reversible NADPH linked reduction of 3-dehydroshikimate (DHSA) to yield shikimate (SA). The chain is Shikimate dehydrogenase (NADP(+)) from Clostridium perfringens (strain 13 / Type A).